Here is a 508-residue protein sequence, read N- to C-terminus: Abl interactor 1 (508 aa).

The residue at position 2 (A2) is an N-acetylalanine. Residues 18–79 (ALIESYQNLT…NNVLQLLDIQ (62 aa)) are required for binding to WASF1. The t-SNARE coiled-coil homology domain maps to 45-107 (KALEETKAYT…DIHKEKVARR (63 aa)). Y53 is subject to Phosphotyrosine. Disordered stretches follow at residues 159–290 (KHGN…APPL), 306–375 (APGS…LTPQ), and 388–421 (NIAD…PVDY). The segment covering 161–175 (GNNQPARTGTLSRTN) has biased composition (polar residues). T174 and T178 each carry phosphothreonine. Residues S183 and S187 each carry the phosphoserine modification. Y213 carries the phosphotyrosine; by ABL1 modification. T215 bears the Phosphothreonine mark. Phosphoserine is present on residues S216, S222, and S225. Positions 222-235 (SQHSPGRTASLNQR) are enriched in polar residues. Positions 248-258 (SRENSGSSSIG) are enriched in low complexity. The span at 278-290 (VPPPSGAPPAPPL) shows a compositional bias: pro residues. The span at 307-322 (PGSQYGTMTRQISRHN) shows a compositional bias: polar residues. A phosphoserine mark is found at S319 and S323. The segment covering 337-347 (PSVTAQFSAQP) has biased composition (polar residues). Pro residues-rich tracts occupy residues 393-403 (PTPPPPPPPDD) and 410-419 (SPPPPPPPPV). The region spanning 446–505 (NYIEKVVAIYDYTKDKDDELSFMEGAIIYVIKKNDDGWYEGVCNRVTGLFPGNYVESIMH) is the SH3 domain. The residue at position 455 (Y455) is a Phosphotyrosine. Position 466 is a phosphoserine (S466). The residue at position 507 (T507) is a Phosphothreonine.

This sequence belongs to the ABI family. In terms of assembly, interacts with ABL1, ENAH, STX1A, SNAP25, VAMP2, EPS8, and through its N-terminus with WASF1. Part of a complex consisting of ABI1, STX1A and SNAP25. Part of a complex consisting of ABI1, EPS8 and SOS1. Interacts with SOS1, SOS2, GRB2, SPTA1 and the first SH3 domain of NCK1. Isoform 6 does not interact with NCK1. Component of the WAVE2 complex composed of ABI1, CYFIP1/SRA1, NCKAP1/NAP1 (NCKAP1l/HEM1 in hematopoietic cells) and WASF2/WAVE2. Interacts (via SH3 domain) with SHANK2 and SHANK3, but not SHANK1; the interaction is direct. Interacts with the heterodimer MYC:MAX; the interaction may enhance MYC:MAX transcriptional activity. Interacts with FNBP1L (via the SH3 domain), WASF2, and CDC42, but only in the presence of FNBP1L. As to quaternary structure, (Microbial infection) Interacts with human cytomegalovirus/HHV-5 protein UL135. In terms of processing, phosphorylated on tyrosine residues after serum stimulation or induction by v-Abl. Seems to be phosphorylated at Tyr-53 by ABL1, required for nuclear but not for synaptic localization. As to expression, widely expressed, with highest expression in brain.

The protein localises to the cytoplasm. The protein resides in the nucleus. It is found in the cell projection. Its subcellular location is the lamellipodium. It localises to the filopodium. The protein localises to the growth cone. The protein resides in the postsynaptic density. It is found in the cytoskeleton. May act in negative regulation of cell growth and transformation by interacting with nonreceptor tyrosine kinases ABL1 and/or ABL2. May play a role in regulation of EGF-induced Erk pathway activation. Involved in cytoskeletal reorganization and EGFR signaling. Together with EPS8 participates in transduction of signals from Ras to Rac. In vitro, a trimeric complex of ABI1, EPS8 and SOS1 exhibits Rac specific guanine nucleotide exchange factor (GEF) activity and ABI1 seems to act as an adapter in the complex. Regulates ABL1/c-Abl-mediated phosphorylation of ENAH. Recruits WASF1 to lamellipodia and there seems to regulate WASF1 protein level. In brain, seems to regulate the dendritic outgrowth and branching as well as to determine the shape and number of synaptic contacts of developing neurons. The polypeptide is Abl interactor 1 (Homo sapiens (Human)).